Here is a 419-residue protein sequence, read N- to C-terminus: Phosphoglycerate kinase (419 aa).

The (2R)-3-phosphoglycerate site is built by valine 24, aspartate 25, phenylalanine 26, asparagine 27, arginine 40, serine 63, histidine 64, glycine 66, arginine 67, leucine 122, arginine 123, histidine 169, and arginine 170. Glycine 213 lines the ADP pocket. Position 213 (glycine 213) interacts with CDP. Positions 214 and 215 each coordinate AMP. Residue alanine 214 participates in ATP binding. Alanine 214 is a binding site for Mg(2+). Residues alanine 217 and aspartate 218 each coordinate Mg(2+). Aspartate 218 lines the CDP pocket. Lysine 219 serves as a coordination point for AMP. Lysine 219 contributes to the ATP binding site. Residue glycine 237 coordinates ADP. Glycine 237 serves as a coordination point for CDP. 2 residues coordinate AMP: glycine 238 and glycine 313. ATP contacts are provided by glycine 238 and glycine 313. Glycine 338 and phenylalanine 343 together coordinate CDP. Phenylalanine 343 is an ADP binding site. Glutamate 344 lines the AMP pocket. Residues glutamate 344, aspartate 375, and threonine 376 each coordinate ATP. Residue aspartate 375 coordinates Mg(2+).

This sequence belongs to the phosphoglycerate kinase family. Monomer. Requires Mg(2+) as cofactor.

It catalyses the reaction (2R)-3-phosphoglycerate + ATP = (2R)-3-phospho-glyceroyl phosphate + ADP. It functions in the pathway carbohydrate degradation; glycolysis; pyruvate from D-glyceraldehyde 3-phosphate: step 2/5. This chain is Phosphoglycerate kinase (PGK), found in Sterkiella nova (Ciliate).